The sequence spans 284 residues: MPAQLLDGNALSKKLRAEIAARAAIVTAKGVRPGLAVIVVGDNPASQVYVRNKVKACEDVGFHSVLEPYPAELGEEELLARIATLNADPAIHGILVQLPLPEHIAAERVLEAIAPEKDVDGFHVSNAGALMVGKPEFIPCTPYGCMKLLESIEYPIRGARAVIVGASNIVGKPMAMLLLQAGATVTICNSKTRDLAHHTKDADILVVATGKPKMVSGDMIKNGAVVIDVGINRLPDGKLCGDVDFDAAKYVAGWITPVPGGVGPMTITMLLMNTLEAAEKASKP.

NADP(+)-binding positions include 165–167, S190, and I231; that span reads GAS.

It belongs to the tetrahydrofolate dehydrogenase/cyclohydrolase family. In terms of assembly, homodimer.

It catalyses the reaction (6R)-5,10-methylene-5,6,7,8-tetrahydrofolate + NADP(+) = (6R)-5,10-methenyltetrahydrofolate + NADPH. The catalysed reaction is (6R)-5,10-methenyltetrahydrofolate + H2O = (6R)-10-formyltetrahydrofolate + H(+). It participates in one-carbon metabolism; tetrahydrofolate interconversion. Its function is as follows. Catalyzes the oxidation of 5,10-methylenetetrahydrofolate to 5,10-methenyltetrahydrofolate and then the hydrolysis of 5,10-methenyltetrahydrofolate to 10-formyltetrahydrofolate. This is Bifunctional protein FolD from Polynucleobacter asymbioticus (strain DSM 18221 / CIP 109841 / QLW-P1DMWA-1) (Polynucleobacter necessarius subsp. asymbioticus).